The following is a 1848-amino-acid chain: Autophagy-related protein 2 (1848 aa).

5 disordered regions span residues 129-168, 237-274, 386-417, 494-540, and 1717-1737; these read DSDS…SKPS, PGEL…GDES, LKRQ…GENT, TAAT…GSKS, and DDNS…ADEE. Over residues 132–146 the composition is skewed to acidic residues; that stretch reads SAAEDESDDTDEEIV. The segment covering 154 to 168 has biased composition (low complexity); sequence SSSSSSFSGSTSKPS. Residues 254 to 274 are compositionally biased toward acidic residues; that stretch reads SDNEEDDSNYEDDNNDYGDES. Over residues 494–507 the composition is skewed to polar residues; sequence TAATHAEQSQSQPD. Over residues 525–540 the composition is skewed to low complexity; that stretch reads MSPSSISSMSSSGSKS. Acidic residues predominate over residues 1725–1737; the sequence is EEDEADDSSADEE.

The protein belongs to the ATG2 family.

It is found in the preautophagosomal structure membrane. The protein localises to the endoplasmic reticulum membrane. It carries out the reaction a 1,2-diacyl-sn-glycero-3-phosphocholine(in) = a 1,2-diacyl-sn-glycero-3-phosphocholine(out). The enzyme catalyses a 1,2-diacyl-sn-glycero-3-phospho-L-serine(in) = a 1,2-diacyl-sn-glycero-3-phospho-L-serine(out). The catalysed reaction is a 1,2-diacyl-sn-glycero-3-phosphoethanolamine(in) = a 1,2-diacyl-sn-glycero-3-phosphoethanolamine(out). Lipid transfer protein required for autophagosome completion and peroxisome degradation. Tethers the edge of the isolation membrane (IM) to the endoplasmic reticulum (ER) and mediates direct lipid transfer from ER to IM for IM expansion. ATG2 binds to the ER exit site (ERES), which is the membrane source for autophagosome formation, using basic residues in its N-terminal region (NR) and to the expanding edge of the IM through its C-terminal region. The latter binding is assisted by an ATG18-PtdIns3P interaction. ATG2 then extracts phospholipids from the membrane source using its NR and transfers them to ATG9 to the IM through its predicted beta-sheet-rich structure for membrane expansion. The polypeptide is Autophagy-related protein 2 (ATG2) (Scheffersomyces stipitis (strain ATCC 58785 / CBS 6054 / NBRC 10063 / NRRL Y-11545) (Yeast)).